We begin with the raw amino-acid sequence, 361 residues long: Chorismate synthase (361 aa).

NADP(+) contacts are provided by arginine 48 and arginine 54. Residues 131 to 133 (RSS), 243 to 244 (NA), glycine 287, 302 to 306 (KPTSS), and arginine 328 each bind FMN.

The protein belongs to the chorismate synthase family. In terms of assembly, homotetramer. The cofactor is FMNH2.

It catalyses the reaction 5-O-(1-carboxyvinyl)-3-phosphoshikimate = chorismate + phosphate. The protein operates within metabolic intermediate biosynthesis; chorismate biosynthesis; chorismate from D-erythrose 4-phosphate and phosphoenolpyruvate: step 7/7. Catalyzes the anti-1,4-elimination of the C-3 phosphate and the C-6 proR hydrogen from 5-enolpyruvylshikimate-3-phosphate (EPSP) to yield chorismate, which is the branch point compound that serves as the starting substrate for the three terminal pathways of aromatic amino acid biosynthesis. This reaction introduces a second double bond into the aromatic ring system. The chain is Chorismate synthase from Rhodopseudomonas palustris (strain HaA2).